A 91-amino-acid chain; its full sequence is Small ribosomal subunit protein uS15 (91 aa).

This sequence belongs to the universal ribosomal protein uS15 family. Part of the 30S ribosomal subunit. Forms a bridge to the 50S subunit in the 70S ribosome, contacting the 23S rRNA.

One of the primary rRNA binding proteins, it binds directly to 16S rRNA where it helps nucleate assembly of the platform of the 30S subunit by binding and bridging several RNA helices of the 16S rRNA. Functionally, forms an intersubunit bridge (bridge B4) with the 23S rRNA of the 50S subunit in the ribosome. This is Small ribosomal subunit protein uS15 from Rickettsia bellii (strain OSU 85-389).